Consider the following 166-residue polypeptide: Thioredoxin, mitochondrial (166 aa).

Residues 1-59 (MAQRLLLRRFLTSVISRKPPQGVWASLTSTSLQTPPYNAGGLTGTPSPARTFHTTRVCS) constitute a mitochondrion transit peptide. The Thioredoxin domain occupies 61 to 166 (TFNVQDGPDF…LEAFLKKLIG (106 aa)). Catalysis depends on nucleophile residues Cys-90 and Cys-93. Cys-90 and Cys-93 are joined by a disulfide. Position 152 is an N6-acetyllysine; alternate (Lys-152). An N6-succinyllysine; alternate modification is found at Lys-152.

This sequence belongs to the thioredoxin family. Monomer. In terms of tissue distribution, expressed in several tissues with the highest expression levels in heart, muscle, kidney and adrenal gland.

It is found in the mitochondrion. In terms of biological role, important for the control of mitochondrial reactive oxygen species homeostasis, apoptosis regulation and cell viability. Is involved in various redox reactions including the reduction of protein disulfide bonds, through the reversible oxidation of its active center dithiol to a disulfide. This chain is Thioredoxin, mitochondrial (Txn2), found in Rattus norvegicus (Rat).